Consider the following 1020-residue polypeptide: MLKIFEKIFGSKHEKDIQKIQPVINRINEIQEGLKGLGDDELKEKGKALKSRIRGVLMPIEDKKKELYRQLDNPELSLEEAESIHSSLDALAEEYEEKTASALEEALPETFALVKETCRRLKGLTYQVMGRDVVWDMVPYDVQLIGGIVLHSGKISEMATGEGKTLVSTLPTFLNALTGRGVHLVTVNDYLAQRDKEWMNPVFDFHNISVGVILNTMRPEERRQQYQCDVTYGTNNEFGFDYLRDNMAGTVEEMVQRDFYFAIVDEVDSVLIDEARTPLIISGPVPNSDNSQFQEIKPWIEQIVRAQQQLAASYLTEAEKALKESPQSPEAGLALLRVKRGQPKNTRFIKILSQQGMAKLIQVTENEYLRDNSSRMHEVDDELYFAVDEKAGTIDLTDKGREFLSKLSHQDRDLFLLPDVGTEVAAIDDDESVIAADKITRKDAVYRLFAERSERLHNISQLLKAYSLFLKDDEYVVQNGQVMIVDEFTGRILPGRRYSDGLHQAIEAKENVKIEGETQTMATVTIQNFFRLYEKLAGMTGTAETEASEFFEIYKLDVVAIPTNRPIVRKDMDDLVYKTRREKYNAIALKVEELQKKGQPVLVGTTSVEVSETLSRMLRARRIAHNVLNAKQNEREAEIVEGAGRPGAVTIATNMAGRGTDIKLGEGVREKGGLYILGSERHESRRIDRQLRGRAGRQGDPGESVFFVSLEDELMRLFGSDRVISVMDRLGHEEGDVIEHSMITKSIERAQKKVEEQNFAIRKRLLEYDDVLNQQREVIYTRRRDGLIKERLTTDILDLLRDYCDSVIDRHSKNLDTEGIEEQLLRELSIEFKPDRNNLEENATGVSEELYNSALAFYRRKEEAVPADIMRQIEKYAVLSVIDKQWRDHLREIDTLREGINLRAYGQKDPLLEYKQEAYNLFIQMLSEIELETLSLAFKLFPVNPDEVRAIEERQRQAAVRQEKLVTQHDDAASVYNASPGAENEAPLQRPVTADSKPGRNDPCPCGSGKKYKNCHGQQP.

ATP is bound by residues Gln143, 161–165, and Asp661; that span reads GEGKT. Positions 974 to 1020 are disordered; that stretch reads SVYNASPGAENEAPLQRPVTADSKPGRNDPCPCGSGKKYKNCHGQQP. Positions 1004, 1006, 1015, and 1016 each coordinate Zn(2+).

The protein belongs to the SecA family. In terms of assembly, monomer and homodimer. Part of the essential Sec protein translocation apparatus which comprises SecA, SecYEG and auxiliary proteins SecDF. Other proteins may also be involved. Zn(2+) serves as cofactor.

The protein localises to the cell inner membrane. It localises to the cytoplasm. It carries out the reaction ATP + H2O + cellular proteinSide 1 = ADP + phosphate + cellular proteinSide 2.. Functionally, part of the Sec protein translocase complex. Interacts with the SecYEG preprotein conducting channel. Has a central role in coupling the hydrolysis of ATP to the transfer of proteins into and across the cell membrane, serving as an ATP-driven molecular motor driving the stepwise translocation of polypeptide chains across the membrane. In Chlorobium phaeovibrioides (strain DSM 265 / 1930) (Prosthecochloris vibrioformis (strain DSM 265)), this protein is Protein translocase subunit SecA.